The chain runs to 856 residues: Cyclic di-GMP phosphodiesterase PdeB (856 aa).

The next 2 membrane-spanning stretches (helical) occupy residues 7 to 27 and 230 to 250; these read ILVF…YCLG and WVSL…YVWL. In terms of domain architecture, PAS spans 303 to 350; it reads QKERGKITLESIAEAVILTDIEAKVIYMNPKAETLLEVASSNAVGESL. The GGDEF domain maps to 454–587; that stretch reads RSLAVCYLDL…GTNQIHIYDD (134 aa). One can recognise an EAL domain in the interval 598 to 852; the sequence is APKWAVRIAQ…SYCEQFETRL (255 aa).

Its subcellular location is the cell membrane. It carries out the reaction 3',3'-c-di-GMP + H2O = 5'-phosphoguanylyl(3'-&gt;5')guanosine + H(+). Functionally, affects motility and biofilm formation, and is linked to the regulation of sulfate uptake and assimilation. The protein is Cyclic di-GMP phosphodiesterase PdeB (pdeB) of Shewanella oneidensis (strain ATCC 700550 / JCM 31522 / CIP 106686 / LMG 19005 / NCIMB 14063 / MR-1).